Consider the following 295-residue polypeptide: Ribosomal RNA small subunit methyltransferase A (295 aa).

Residues Asn-28, Leu-30, Gly-55, Glu-76, Asp-101, and Asn-131 each coordinate S-adenosyl-L-methionine.

Belongs to the class I-like SAM-binding methyltransferase superfamily. rRNA adenine N(6)-methyltransferase family. RsmA subfamily.

The protein resides in the cytoplasm. The enzyme catalyses adenosine(1518)/adenosine(1519) in 16S rRNA + 4 S-adenosyl-L-methionine = N(6)-dimethyladenosine(1518)/N(6)-dimethyladenosine(1519) in 16S rRNA + 4 S-adenosyl-L-homocysteine + 4 H(+). Specifically dimethylates two adjacent adenosines (A1518 and A1519) in the loop of a conserved hairpin near the 3'-end of 16S rRNA in the 30S particle. May play a critical role in biogenesis of 30S subunits. The polypeptide is Ribosomal RNA small subunit methyltransferase A (Pelotomaculum thermopropionicum (strain DSM 13744 / JCM 10971 / SI)).